We begin with the raw amino-acid sequence, 331 residues long: Ferredoxin--NADP reductase (331 aa).

Residues E38, Q46, Y51, A91, L125, D282, and S323 each contribute to the FAD site.

It belongs to the ferredoxin--NADP reductase type 2 family. In terms of assembly, homodimer. FAD serves as cofactor.

The enzyme catalyses 2 reduced [2Fe-2S]-[ferredoxin] + NADP(+) + H(+) = 2 oxidized [2Fe-2S]-[ferredoxin] + NADPH. This chain is Ferredoxin--NADP reductase, found in Deinococcus geothermalis (strain DSM 11300 / CIP 105573 / AG-3a).